A 237-amino-acid polypeptide reads, in one-letter code: Phosphoribosylaminoimidazole-succinocarboxamide synthase (237 aa).

This sequence belongs to the SAICAR synthetase family.

The catalysed reaction is 5-amino-1-(5-phospho-D-ribosyl)imidazole-4-carboxylate + L-aspartate + ATP = (2S)-2-[5-amino-1-(5-phospho-beta-D-ribosyl)imidazole-4-carboxamido]succinate + ADP + phosphate + 2 H(+). Its pathway is purine metabolism; IMP biosynthesis via de novo pathway; 5-amino-1-(5-phospho-D-ribosyl)imidazole-4-carboxamide from 5-amino-1-(5-phospho-D-ribosyl)imidazole-4-carboxylate: step 1/2. The polypeptide is Phosphoribosylaminoimidazole-succinocarboxamide synthase (Fusobacterium nucleatum subsp. nucleatum (strain ATCC 25586 / DSM 15643 / BCRC 10681 / CIP 101130 / JCM 8532 / KCTC 2640 / LMG 13131 / VPI 4355)).